A 400-amino-acid polypeptide reads, in one-letter code: Trans-enoyl reductase ucsL (400 aa).

NADP(+) is bound at residue 50–53 (TDHK). 145-152 (SVHGSVAL) is a substrate binding site. NADP(+)-binding positions include 204-207 (STAC), 227-230 (SPRN), Tyr-245, and 292-293 (LE). 313-317 (GPVMF) serves as a coordination point for substrate. Residue 389–390 (VS) coordinates NADP(+).

The protein belongs to the zinc-containing alcohol dehydrogenase family. Monomer.

The protein operates within mycotoxin biosynthesis. Functionally, trans-enoyl reductase; part of the gene cluster that mediates the biosynthesis of UCS1025A, a member of the pyrrolizidinone family that acts as a strong telomerase inhibitor and displays potent antibacterial and antitumor properties. These compounds share a hemiaminal-containing pyrrolizidinone core fused with a gamma-lactone, giving a furopyrrolizidine that is connected to a decalin fragment. The polyketide synthase module (PKS) of the PKS-NRPS ucsA is responsible for the synthesis of the polyketide backbone via the condensation of an acetyl-CoA starter unit with 6 malonyl-CoA units. The downstream nonribosomal peptide synthetase (NRPS) module then amidates the carboxyl end of the polyketide with a 2S,3S-methylproline derived from L-isoleucine by the 2-oxoglutarate-dependent dioxygenase ucsF which converts L-isoleucine to (4S,5S)-4-methylpyrroline-5-carboxylate that is further converted to 2S,3S-methylproline by the pyrroline-5-carboxylate reductase ucsG. Reductive release of the completed aminoacyl polyketide from the assembly line can form the 3-pyrrolin-2-one structure via an intramolecular Knoevenagel reaction. Because ucsA lacks a designated enoylreductase (ER) domain, the required activity is provided the enoyl reductase ucsL. This keto acyclic precursor is the substrate of the Diels-Alderase ucsH, that catalyzes the Diels-Alder cycloaddition. Oxidation of the 3S-methyl group to a carboxylate by the cytochrome P450 monooxygenase ucsK allows an oxa-Michael cyclization that might involve the reductase/dehydrogenase ucsI and which furnishes the furopyrrolizidine. The oxidase ucsJ likely plays a critical role in stereoselective reduction of the C5-C6 double bond to afford the required R-configured carboxylate group. Further enolization and oxidation at C5 by an unidentified enzyme affords the last intermediate that can undergo oxa-Michael cyclization to yield UCS1025A. The polypeptide is Trans-enoyl reductase ucsL (Acremonium sp).